A 512-amino-acid polypeptide reads, in one-letter code: CaM kinase-like vesicle-associated protein (512 aa).

Residues 24–286 (YDLGQVIKTE…AEEAISHEWI (263 aa)) form the Protein kinase domain. The tract at residues 328–347 (APEQSGTAATQSASDAATPG) is disordered. The segment covering 332 to 347 (SGTAATQSASDAATPG) has biased composition (low complexity). Position 392 is a phosphoserine (Ser392). Residues 393-512 (ADRSATPATD…AQESQRVETS (120 aa)) are disordered. The segment covering 398–439 (TPATDGSATPATDGSVTPATDGSITPATDGSVTPATDRSATP) has biased composition (polar residues). Thr446 carries the phosphothreonine modification. Over residues 449–460 (TEESTVPATQSS) the composition is skewed to polar residues. The segment covering 461 to 478 (ALPAAKAAATPEPAVAQP) has biased composition (low complexity). Thr470 carries the post-translational modification Phosphothreonine.

This sequence belongs to the protein kinase superfamily. CAMK Ser/Thr protein kinase family. As to quaternary structure, interacts with calmodulin, in the presence of calcium. The cofactor is Ca(2+).

The protein resides in the cell membrane. It localises to the cytoplasmic vesicle membrane. In terms of biological role, does not appear to have detectable kinase activity. The protein is CaM kinase-like vesicle-associated protein (Camkv) of Mus musculus (Mouse).